Consider the following 523-residue polypeptide: Sugar carrier protein C (523 aa).

Residues 1 to 25 lie on the Cytoplasmic side of the membrane; it reads MPAVGGIPPSGGNRKVYPGNLTLYV. A run of 12 helical transmembrane segments spans residues 26–46, 86–106, 120–140, 143–163, 172–192, 205–225, 298–320, 327–347, 351–371, 387–407, 433–453, and 456–476; these read TVTCVVAAMGGLIFGYDIGIS, MFTSSLYLAALIASLVASTIT, VLFCAGAIINGAAKAVWMLIL, ILLGFGIGFANQSVPLYLSEM, LNIGFQLSITIGILVANVLNY, LSLGGAMVPALIITVGSLVLP, LTGINVIMFYAPVLFDTIGFGSD, VITGLVNVFATMVSIYGVDKW, FLFLEGGVQMLICQAIVAACI, WYAVVVVLFICIYVSGFAWSW, SVNMFFTFVVAQVFLIMLCHL, and GLFIFFSFFVLIMSIFVYYFL. Topologically, residues 477–523 are cytoplasmic; sequence PETKGIPIEEMGQVWKQHWYWSRYVVDEDYPNGGLEMGKEGRIPKNV.

This sequence belongs to the major facilitator superfamily. Sugar transporter (TC 2.A.1.1) family.

It localises to the membrane. The polypeptide is Sugar carrier protein C (STC) (Ricinus communis (Castor bean)).